A 348-amino-acid polypeptide reads, in one-letter code: GPALPP motifs-containing protein 1 (348 aa).

Disordered stretches follow at residues 1–163 and 177–317; these read MARD…AKGP and QRMK…DLKV. A2 bears the N-acetylalanine mark. The GPALPP motif 1 signature appears at 7-12; it reads GPALPP. Basic and acidic residues predominate over residues 14-27; it reads FKERATVEDQERDP. Residue S28 is modified to Phosphoserine. The short motif at 32-37 is the GPALPP motif 2 element; sequence GPALPP. A compositionally biased stretch (low complexity) spans 41 to 59; sequence SSSSDSSDSNEDSSSLSEE. A compositionally biased stretch (acidic residues) spans 60 to 69; that stretch reads GNQESEEDDA. Residues 93-98 carry the GPALPP motif 3 motif; it reads GPALPP. S106 bears the Phosphoserine mark. Positions 108–117 are enriched in pro residues; that stretch reads PRPIIGPALP. Positions 113–118 match the GPALPP motif 4 motif; it reads GPALPP. 3 positions are modified to phosphoserine: S138, S143, and S148. Residues 144-154 are compositionally biased toward acidic residues; the sequence is EEAESGEDEDI. Basic and acidic residues-rich tracts occupy residues 177–195, 235–269, 277–287, and 295–317; these read QRMKEKLTKGDDDSPKPVT, PADRERKAKEIQEARKSLSKKDEENMLSGRDKRLA, ESKRSESLMDI, and KAAEDKNRHQERTPFDRDKDLKV. Residues K279 and K316 each participate in a glycyl lysine isopeptide (Lys-Gly) (interchain with G-Cter in SUMO2) cross-link.

This chain is GPALPP motifs-containing protein 1 (Gpalpp1), found in Rattus norvegicus (Rat).